Reading from the N-terminus, the 239-residue chain is Metallo-beta-lactamase IND-1 (239 aa).

The signal sequence occupies residues 1–20; sequence MKKSIRFFIVSILLSPFASA. Positions 96, 98, 100, 159, and 178 each coordinate Zn(2+). Residue Lys181 participates in a beta-lactam binding. Zn(2+) is bound at residue His220.

This sequence belongs to the metallo-beta-lactamase superfamily. Class-B beta-lactamase family. Monomer. The cofactor is Zn(2+).

The protein localises to the periplasm. The enzyme catalyses a beta-lactam + H2O = a substituted beta-amino acid. Its activity is regulated as follows. Inhibited by chelating agents such as EDTA. Not susceptible to inactivation by the beta-lactamase-blocking agent clavulanic acid. In terms of biological role, class B beta-lactamase which confers resistance to the beta-lactam antibiotics, including penicillins, cephalosporins and carbapenems. Acts via hydrolysis of the beta-lactam ring. Has penicillin-, cephalosporin- and carbapenem-hydrolyzing activities. The chain is Metallo-beta-lactamase IND-1 from Chryseobacterium indologenes (Flavobacterium indologenes).